A 510-amino-acid chain; its full sequence is ATP synthase subunit alpha (510 aa).

169–176 is an ATP binding site; the sequence is GDRQTGKT.

The protein belongs to the ATPase alpha/beta chains family. F-type ATPases have 2 components, CF(1) - the catalytic core - and CF(0) - the membrane proton channel. CF(1) has five subunits: alpha(3), beta(3), gamma(1), delta(1), epsilon(1). CF(0) has three main subunits: a(1), b(2) and c(9-12). The alpha and beta chains form an alternating ring which encloses part of the gamma chain. CF(1) is attached to CF(0) by a central stalk formed by the gamma and epsilon chains, while a peripheral stalk is formed by the delta and b chains.

Its subcellular location is the cell inner membrane. It catalyses the reaction ATP + H2O + 4 H(+)(in) = ADP + phosphate + 5 H(+)(out). In terms of biological role, produces ATP from ADP in the presence of a proton gradient across the membrane. The alpha chain is a regulatory subunit. This chain is ATP synthase subunit alpha, found in Azorhizobium caulinodans (strain ATCC 43989 / DSM 5975 / JCM 20966 / LMG 6465 / NBRC 14845 / NCIMB 13405 / ORS 571).